The chain runs to 404 residues: Formate-dependent phosphoribosylglycinamide formyltransferase (404 aa).

Residues 25–26 (EL) and E85 each bind N(1)-(5-phospho-beta-D-ribosyl)glycinamide. ATP contacts are provided by residues R118, K159, 164-169 (SSGKGQ), 199-202 (EGFI), and E207. Residues 123 to 318 (RLAAEELGLP…EFELHARAIL (196 aa)) enclose the ATP-grasp domain. The Mg(2+) site is built by E277 and E289. N(1)-(5-phospho-beta-D-ribosyl)glycinamide contacts are provided by residues D296, K365, and 372–373 (RR).

The protein belongs to the PurK/PurT family. Homodimer.

It catalyses the reaction N(1)-(5-phospho-beta-D-ribosyl)glycinamide + formate + ATP = N(2)-formyl-N(1)-(5-phospho-beta-D-ribosyl)glycinamide + ADP + phosphate + H(+). It functions in the pathway purine metabolism; IMP biosynthesis via de novo pathway; N(2)-formyl-N(1)-(5-phospho-D-ribosyl)glycinamide from N(1)-(5-phospho-D-ribosyl)glycinamide (formate route): step 1/1. Involved in the de novo purine biosynthesis. Catalyzes the transfer of formate to 5-phospho-ribosyl-glycinamide (GAR), producing 5-phospho-ribosyl-N-formylglycinamide (FGAR). Formate is provided by PurU via hydrolysis of 10-formyl-tetrahydrofolate. This chain is Formate-dependent phosphoribosylglycinamide formyltransferase, found in Burkholderia mallei (strain NCTC 10247).